Here is a 739-residue protein sequence, read N- to C-terminus: G2 and S phase-expressed protein 1 (739 aa).

Over residues 1–11 the composition is skewed to basic and acidic residues; sequence MEGGGGRDEPS. Positions 1–20 are disordered; the sequence is MEGGGGRDEPSACRAGDVNM. At Ser91 the chain carries Phosphoserine. Disordered regions lie at residues 116-136, 149-306, and 320-639; these read SRNQAAQAAKPEDPRSQGVER, EKEK…AIPV, and PGST…GDAA. Residues 149 to 165 show a composition bias toward basic and acidic residues; that stretch reads EKEKEMKKSPTSLKRET. Phosphoserine is present on Ser157. Position 159 is a phosphothreonine (Thr159). Phosphoserine occurs at positions 171, 187, 208, 247, and 262. A compositionally biased stretch (low complexity) spans 181–195; sequence PRLLASSPALPSSGA. Residues 268 to 280 show a composition bias toward basic and acidic residues; it reads IPAEKESHRDVLP. 2 stretches are compositionally biased toward low complexity: residues 284–294 and 330–342; these read APGAVNVPAAG and SSSGPVWSGASSA. Position 331 is a phosphoserine (Ser331). Residues 360–372 are compositionally biased toward polar residues; the sequence is PANSSRPLSNISK. Residues 411 to 424 show a composition bias toward low complexity; sequence TAPPSASPTQPQTP. 2 stretches are compositionally biased toward polar residues: residues 430–446 and 455–470; these read WLNSSCAWSESSQLNKT and CLNSKTKVMPTPTNQF. A Phosphoserine modification is found at Ser480. Over residues 481-522 the composition is skewed to polar residues; sequence PDSSTPKLSRAQRPQSCTSVGRVTVHSTPVRRSSGPAPQSLL. A Phosphothreonine modification is found at Thr485. A phosphoserine mark is found at Ser496, Ser499, Ser514, Ser520, Ser523, and Ser528. Thr532 bears the Phosphothreonine mark. Phosphoserine is present on residues Ser535 and Ser555. Residues 577 to 590 are compositionally biased toward basic and acidic residues; that stretch reads EPTRESNRKTDSRL. A phosphoserine mark is found at Ser594 and Ser611. Thr696 is subject to Phosphothreonine. Phosphoserine occurs at positions 707, 717, 718, 724, and 734.

In terms of processing, phosphorylated in mitosis.

Its subcellular location is the cytoplasm. The protein localises to the cytoskeleton. May be involved in p53-induced cell cycle arrest in G2/M phase by interfering with microtubule rearrangements that are required to enter mitosis. Overexpression delays G2/M phase progression. The chain is G2 and S phase-expressed protein 1 from Homo sapiens (Human).